The primary structure comprises 345 residues: MLLREVTKEERKEFYSNEWNAKQIPDFILQNLDKREFGFDHTGEGPSDRKNSYTDVRDLEDYIKATAPYAVYSSVAFYEKPQEMEGWLGAELVFDIDAKDLPLRRCNHEPGKVCPICLNDAKEIARDTLIVLKEELGFEDVHVVYSGRGYHIRVMDGWALSLDSKSRERILSFISASEIEDHSEFRKMLLERRGWFVLNHGYPRVFRLRFGYFILRVKVEHLINFGIRKNIAKRILDNKETIYEEFVRKGILAAFPDGVGIESLAKLFALSTRFSKAYFDGRVTVDLKRILRLPSTLHSKVGLIAKYIGNNERDVMRFNPFKHAVPKFRRKEVKEEYKRFLEENF.

Residues Asp-95 and Asp-97 contribute to the active site. Zn(2+) contacts are provided by Cys-106, His-108, Cys-114, and Cys-117. Positions 106–117 (CNHEPGKVCPIC) match the Zinc knuckle motif motif. Asp-280 is a catalytic residue.

Belongs to the eukaryotic-type primase small subunit family. As to quaternary structure, heterodimer of a small subunit (PriS) and a large subunit (PriL). It depends on Mg(2+) as a cofactor. Mn(2+) serves as cofactor.

Its function is as follows. Catalytic subunit of DNA primase, an RNA polymerase that catalyzes the synthesis of short RNA molecules used as primers for DNA polymerase during DNA replication. The small subunit contains the primase catalytic core and has DNA synthesis activity on its own, synthesizing DNA strands up to 3 kB. Binding to the large subunit stabilizes and modulates the activity, increasing the rate of DNA synthesis while decreasing the length of the DNA fragments, and conferring RNA synthesis capability for RNA fragments up to 150 bases. The DNA polymerase activity may enable DNA primase to also catalyze primer extension after primer synthesis. May also play a role in DNA repair. Displays gap-filling and strand-displacement activities. This chain is DNA primase small subunit PriS, found in Pyrococcus abyssi (strain GE5 / Orsay).